Reading from the N-terminus, the 149-residue chain is Calmodulin-1 (149 aa).

N-acetylalanine is present on A2. 4 consecutive EF-hand domains span residues 8–43, 44–79, 81–116, and 117–149; these read DQIAEFKEAFSLFDKDGDGCITTKELGTVMRSLGQN, PTEAELQDMINEVDADGNGTIDFPEFLNLMARKMKD, DSEEELKEAFRVFDKDQNGFISAAELRHVMTNLGEK, and LTDEEVDEMIREADVDGDGQINYEEFVKVMMAK. Residues D21, D23, D25, C27, E32, D57, D59, N61, T63, E68, D94, D96, N98, and E105 each contribute to the Ca(2+) site. K116 carries the N6,N6,N6-trimethyllysine modification. The Ca(2+) site is built by D130, D132, D134, Q136, and E141.

This sequence belongs to the calmodulin family.

Calmodulin mediates the control of a large number of enzymes, ion channels and other proteins by Ca(2+). Among the enzymes to be stimulated by the calmodulin-Ca(2+) complex are a number of protein kinases and phosphatases. The chain is Calmodulin-1 (CAM1-1) from Oryza sativa subsp. indica (Rice).